The following is a 330-amino-acid chain: Ribosomal RNA small subunit methyltransferase A (330 aa).

Residues His-29, Leu-31, Gly-56, Glu-77, and Asp-98 each coordinate S-adenosyl-L-methionine. Residues Pro-115–Gly-158 form a disordered region. Asn-177 contacts S-adenosyl-L-methionine.

It belongs to the class I-like SAM-binding methyltransferase superfamily. rRNA adenine N(6)-methyltransferase family. RsmA subfamily.

Its subcellular location is the cytoplasm. It carries out the reaction adenosine(1518)/adenosine(1519) in 16S rRNA + 4 S-adenosyl-L-methionine = N(6)-dimethyladenosine(1518)/N(6)-dimethyladenosine(1519) in 16S rRNA + 4 S-adenosyl-L-homocysteine + 4 H(+). Functionally, specifically dimethylates two adjacent adenosines (A1518 and A1519) in the loop of a conserved hairpin near the 3'-end of 16S rRNA in the 30S particle. May play a critical role in biogenesis of 30S subunits. The protein is Ribosomal RNA small subunit methyltransferase A of Polaromonas sp. (strain JS666 / ATCC BAA-500).